We begin with the raw amino-acid sequence, 293 residues long: ATP synthase gamma chain (293 aa).

It belongs to the ATPase gamma chain family. In terms of assembly, F-type ATPases have 2 components, CF(1) - the catalytic core - and CF(0) - the membrane proton channel. CF(1) has five subunits: alpha(3), beta(3), gamma(1), delta(1), epsilon(1). CF(0) has three main subunits: a, b and c.

The protein resides in the cell membrane. Produces ATP from ADP in the presence of a proton gradient across the membrane. The gamma chain is believed to be important in regulating ATPase activity and the flow of protons through the CF(0) complex. The protein is ATP synthase gamma chain of Streptococcus sanguinis.